A 468-amino-acid polypeptide reads, in one-letter code: Glutamate--tRNA ligase (468 aa).

A 'HIGH' region motif is present at residues 11–21; it reads PSPTGFIHLGN. The 'KMSKS' region motif lies at 243-247; the sequence is KMSKR. Lys-246 contacts ATP.

Belongs to the class-I aminoacyl-tRNA synthetase family. Glutamate--tRNA ligase type 1 subfamily. In terms of assembly, monomer.

It localises to the cytoplasm. It catalyses the reaction tRNA(Glu) + L-glutamate + ATP = L-glutamyl-tRNA(Glu) + AMP + diphosphate. In terms of biological role, catalyzes the attachment of glutamate to tRNA(Glu) in a two-step reaction: glutamate is first activated by ATP to form Glu-AMP and then transferred to the acceptor end of tRNA(Glu). In Delftia acidovorans (strain DSM 14801 / SPH-1), this protein is Glutamate--tRNA ligase.